The primary structure comprises 147 residues: uncharacterized protein (147 aa).

2 helical membrane passes run 42–62 (WASLICLGLLCVMIMIKSPEP) and 64–84 (LILQEILSHTFYLFWMLATAF).

It localises to the cell membrane. This is an uncharacterized protein from Bacillus subtilis (strain 168).